Here is a 167-residue protein sequence, read N- to C-terminus: ATP synthase subunit delta, mitochondrial (167 aa).

The N-terminal 28 residues, 1 to 28 (MFRLSNYMLRKSQFPQGLVRAPFGIRGY), are a transit peptide targeting the mitochondrion.

The protein belongs to the ATPase epsilon chain family. As to quaternary structure, F-type ATPases have 2 components, CF(1) - the catalytic core - and CF(0) - the membrane proton channel. CF(1) has five subunits: alpha(3), beta(3), gamma(1), delta(1), epsilon(1). CF(0) has three main subunits: a, b and c.

The protein localises to the mitochondrion. Its subcellular location is the mitochondrion inner membrane. Mitochondrial membrane ATP synthase (F(1)F(0) ATP synthase or Complex V) produces ATP from ADP in the presence of a proton gradient across the membrane which is generated by electron transport complexes of the respiratory chain. F-type ATPases consist of two structural domains, F(1) - containing the extramembraneous catalytic core, and F(0) - containing the membrane proton channel, linked together by a central stalk and a peripheral stalk. During catalysis, ATP turnover in the catalytic domain of F(1) is coupled via a rotary mechanism of the central stalk subunits to proton translocation. Part of the complex F(1) domain and of the central stalk which is part of the complex rotary element. Rotation of the central stalk against the surrounding alpha(3)beta(3) subunits leads to hydrolysis of ATP in three separate catalytic sites on the beta subunits. This Schizosaccharomyces pombe (strain 972 / ATCC 24843) (Fission yeast) protein is ATP synthase subunit delta, mitochondrial (atp16).